We begin with the raw amino-acid sequence, 331 residues long: tRNA(Ile)-lysidine synthase (331 aa).

29 to 34 (SGGPDS) serves as a coordination point for ATP.

The protein belongs to the tRNA(Ile)-lysidine synthase family.

The protein localises to the cytoplasm. It carries out the reaction cytidine(34) in tRNA(Ile2) + L-lysine + ATP = lysidine(34) in tRNA(Ile2) + AMP + diphosphate + H(+). In terms of biological role, ligates lysine onto the cytidine present at position 34 of the AUA codon-specific tRNA(Ile) that contains the anticodon CAU, in an ATP-dependent manner. Cytidine is converted to lysidine, thus changing the amino acid specificity of the tRNA from methionine to isoleucine. This Chlorobaculum tepidum (strain ATCC 49652 / DSM 12025 / NBRC 103806 / TLS) (Chlorobium tepidum) protein is tRNA(Ile)-lysidine synthase.